Here is a 144-residue protein sequence, read N- to C-terminus: Hemoglobin subunit alpha-1 (144 aa).

The residue at position 1 (Ser-1) is an N-acetylserine. The region spanning 1 to 144 (SLTAKDKSVV…VSAALADKYR (144 aa)) is the Globin domain. Residue His-61 participates in O2 binding. His-90 provides a ligand contact to heme b.

This sequence belongs to the globin family. In terms of assembly, heterotetramer of two alpha chains and two beta chains. As to expression, red blood cells.

In terms of biological role, involved in oxygen transport from gills to the various peripheral tissues. This chain is Hemoglobin subunit alpha-1 (hba1), found in Oncorhynchus mykiss (Rainbow trout).